Consider the following 583-residue polypeptide: MSATKPRLRSTQWFGTNDKNGFMYRSWMKNQGIPDHEFDGRPIIGICNTWSELTPCNAHFRKLAEHVKRGISEAGGFPVEFPVFSNGESNLRPSAMLTRNLASMDVEEAIRGNPIDAVVLLAGCDKTTPALLMGAASCDVPAIVVSGGPMLNGKLEGKNIGSGTAVWQLHEALKAGEIDVHHFLSAEAGMSRSAGTCNTMGTASTMACMAEALGVALPHNAAIPAVDSRRYVLAHMSGIRIVEMALEGLVLSKILTRAAFENAIRANAAIGGSTNAVIHLKAIAGRIGVPLELEDWMRIGRDTPTIVDLMPSGRFPMEEFYYAGGLPAVLRRLGEGGLLPNPDALTVNGKSLWDNVREAPNYDEEVIRPLDRPLIADGGIRILRGNLAPRGAVLKPSAASPELLKHRGRAVVFENLDHYKATINDEALDIDASSVMVLKNCGPRGYPGMAEVGNMGLPPKLLRQGVKDMVRISDARMSGTAYGTVVLHVAPEAAAGGPLAAVRNGDWIELDCEAGTLHLDITDDELHRRLSDVDPTAAPGVAGQLGKGGYARLYIDHVLQADEGCDLDFLVGTRGAEVPSHSH.

The [4Fe-4S] cluster site is built by Cys-56, Cys-124, and Cys-197.

Belongs to the IlvD/Edd family. As to quaternary structure, homodimer. The cofactor is [4Fe-4S] cluster.

The enzyme catalyses L-arabinonate = 2-dehydro-3-deoxy-L-arabinonate + H2O. With respect to regulation, activity is enhanced by Mg(2+), being optimal with a concentration of 1-10 mM Mg(2+). In terms of biological role, catalyzes the dehydration of L-arabonate to L-2-keto-3-deoxyarabonate (L-KDA). Is involved in a degradation pathway of L-arabinose that allows A.brasilense to grow on L-arabinose as a sole carbon source. To a lesser extent, can also use D-xylonate as substrate, but not D-galactonate, D-arabonate, and D-gluconate. The chain is L-arabonate dehydratase (araC) from Azospirillum brasilense.